The sequence spans 436 residues: MTYKEIAKKYLENNGITIGDTIKINKEDISYEGILLDRSEDSEDGYLVLKLDSGYNVGVAIENTQAELIQKGDKPKIGYGAEDIAHDPSKQNISIISTGGTVSSIIDYRTGAVHPKFTAADLIKANPELLDYANYNVKALYNILSENMQPKYWVEAAESIANDISDGSDGIVIAHGTDTLHYTAAALSFMLKTPVPIVITGAQRSSDRPSSDANMNLIDSVVAAKSDIAEVSVCMHGSLNDSYTYLHKGTKVRKMHTSRRDTFRSINYEPIAKIENHSVDINPNYRYTKRNENELEVNSAVEEKVGLIKSFPGICEELIEYHIDKGYKGLVIEGTGLGHVPDKLITPLARAHDENIPVVMTSQCLYGRVNMNVYSTGREILNAGVISGRDMTPETAYVKLSWVLGQTNDIGEVAKLMNKNIAGEFNEKSSIKYFLN.

An Asparaginase/glutaminase domain is found at 91 to 420; the sequence is QNISIISTGG…GEVAKLMNKN (330 aa). Active-site residues include T101, T177, D178, and K254.

It belongs to the asparaginase 1 family. GatD subfamily. Heterodimer of GatD and GatE.

It carries out the reaction L-glutamyl-tRNA(Gln) + L-glutamine + ATP + H2O = L-glutaminyl-tRNA(Gln) + L-glutamate + ADP + phosphate + H(+). Allows the formation of correctly charged Gln-tRNA(Gln) through the transamidation of misacylated Glu-tRNA(Gln) in organisms which lack glutaminyl-tRNA synthetase. The reaction takes place in the presence of glutamine and ATP through an activated gamma-phospho-Glu-tRNA(Gln). The GatDE system is specific for glutamate and does not act on aspartate. This is Glutamyl-tRNA(Gln) amidotransferase subunit D from Methanobrevibacter smithii (strain ATCC 35061 / DSM 861 / OCM 144 / PS).